The sequence spans 182 residues: Probable RNA 2'-phosphotransferase (182 aa).

Belongs to the KptA/TPT1 family.

Functionally, removes the 2'-phosphate from RNA via an intermediate in which the phosphate is ADP-ribosylated by NAD followed by a presumed transesterification to release the RNA and generate ADP-ribose 1''-2''-cyclic phosphate (APPR&gt;P). May function as an ADP-ribosylase. The chain is Probable RNA 2'-phosphotransferase from Herpetosiphon aurantiacus (strain ATCC 23779 / DSM 785 / 114-95).